Reading from the N-terminus, the 184-residue chain is MKKHLLFLGPPGAGKGTQAALLSAANSYLHLSTGELLRKEIDLDTDLGKQVKDIMNRGELVSDQLVLEIVKKNLDKDNNGWILDGYPRNLSQVNSLNDVLININQPLEIVFYLDIPDEVLIKRLLIRGRKDDNEKTIKTRLKIYKETTEPLIEYYKDLALLENIKADGDLKTISADIKQKMACR.

12 to 17 contacts ATP; the sequence is GAGKGT. Residues 32–61 form an NMP region; the sequence is STGELLRKEIDLDTDLGKQVKDIMNRGELV. Residues Thr-33, Arg-38, 59–61, 85–88, and Gln-92 each bind AMP; these read ELV and GYPR. Residues 126–132 form an LID region; the sequence is IRGRKDD. Arg-127 contacts ATP. Residues Arg-129 and Arg-140 each contribute to the AMP site. Position 168 (Gly-168) interacts with ATP.

It belongs to the adenylate kinase family. As to quaternary structure, monomer.

It is found in the cytoplasm. It carries out the reaction AMP + ATP = 2 ADP. It functions in the pathway purine metabolism; AMP biosynthesis via salvage pathway; AMP from ADP: step 1/1. Catalyzes the reversible transfer of the terminal phosphate group between ATP and AMP. Plays an important role in cellular energy homeostasis and in adenine nucleotide metabolism. The chain is Adenylate kinase from Prochlorococcus marinus subsp. pastoris (strain CCMP1986 / NIES-2087 / MED4).